Consider the following 561-residue polypeptide: uncharacterized protein (561 aa).

2 disordered regions span residues 369–390 and 429–515; these read SVPE…LSKG and EGLG…GESE. Serine 383 is modified (phosphoserine). The span at 465–503 shows a compositional bias: polar residues; that stretch reads NISPESSRFGTPSDPNSSSQSLGNEVLSRPNSNSNSAES.

This is an uncharacterized protein from Schizosaccharomyces pombe (strain 972 / ATCC 24843) (Fission yeast).